The following is a 344-amino-acid chain: MAEPELVNGGVKENKLWKGVFAVSGIMSTLVIYGVLQEKIMRVPYGVNKEFFKHSLFLVFCNRLTTSAVSAGALLASKKVLDPVAPVYKYCLISVTNILTTTCQYEALKYVSFPVQTLAKCAKMIPVMVWGTLIMQKKYKGFDYLVAFLVTLGCSVFILFPAGDDVSPYNKGRENTVWGVSLMAGYLGFDGFTSTFQDKLFKGYNMEIHNQIFYTTLCSCVLSFTGLILQGHLLPAVDFVSLHRDCLLDIALLSTVATASQFFISYTIRTFGALTFAAIMTTRQLASIMLSCIWFSHPLSWEQCIGSVIVFGSLYAKNLLNNKKNSQTQPPPPELPQYEKVESS.

A run of 8 helical transmembrane segments spans residues 16–36 (LWKGVFAVSGIMSTLVIYGVL), 56–76 (LFLVFCNRLTTSAVSAGALLA), 115–135 (VQTLAKCAKMIPVMVWGTLIM), 142–162 (FDYLVAFLVTLGCSVFILFPA), 176–196 (TVWGVSLMAGYLGFDGFTSTF), 220–240 (CVLSFTGLILQGHLLPAVDFV), 246–266 (CLLDIALLSTVATASQFFISY), and 292–312 (CIWFSHPLSWEQCIGSVIVFG). Residues 324–344 (KNSQTQPPPPELPQYEKVESS) are disordered.

This sequence belongs to the nucleotide-sugar transporter family. UDP-galactose:UMP antiporter (TC 2.A.7.11) subfamily.

The protein resides in the membrane. Its function is as follows. Sugar transporter involved in the transport of nucleotide-sugars from cytoplasm into the Golgi and/or the endoplasmic reticulum. This chain is UDP-galactose/UDP-glucose transporter 5B, found in Arabidopsis thaliana (Mouse-ear cress).